We begin with the raw amino-acid sequence, 574 residues long: Golgin subfamily A member 6-like protein 4 (574 aa).

The span at 1 to 11 shows a compositional bias: pro residues; sequence MWPQPRFPPHP. 2 disordered regions span residues 1–77 and 491–552; these read MWPQ…YGEG and KELK…AAGG. The segment covering 51–62 has biased composition (polar residues); it reads NGSSPDTATSGG. The stretch at 157 to 496 forms a coiled coil; that stretch reads SKVEQLQDET…EQQVKELKKS (340 aa). Over residues 491–504 the composition is skewed to basic and acidic residues; the sequence is KELKKSGGAEEPRG. The segment covering 508 to 523 has biased composition (low complexity); the sequence is AAAARPVAGAPVPQGA.

It belongs to the GOLGA6 family.

The chain is Golgin subfamily A member 6-like protein 4 (GOLGA6L4) from Homo sapiens (Human).